A 192-amino-acid polypeptide reads, in one-letter code: Cysteine and glycine-rich protein 1 (192 aa).

The LIM zinc-binding 1 domain occupies 10–61 (CGVCQKAVYFAEEVQCEGSSFHKSCFLCMVCKKNLDSTTVAVHGDEIYCKSC). Positions 64–69 (KKYGPK) match the Nuclear localization signal motif. The 52-residue stretch at 118 to 169 (CPRCGQAVYAAEKVIGAGKSWHKSCFRCAKCGKSLESTTLADKDGEIYCKGC) folds into the LIM zinc-binding 2 domain.

As to quaternary structure, probable monomer. Interacts with ZYX. Most prominent in tissues that are enriched in smooth muscle cells, such as gizzard, stomach, and intestine. Lower level in the heart, no expression in liver, skeletal muscle, or brain.

Its subcellular location is the nucleus. It localises to the cytoplasm. The protein resides in the cytoskeleton. Heat stable protein, that interacts with zyxin/ZYX. May be a component of a signal transduction pathway that mediates adhesion-stimulated changes in gene expression. In Gallus gallus (Chicken), this protein is Cysteine and glycine-rich protein 1 (CSRP1).